A 676-amino-acid polypeptide reads, in one-letter code: Ribosome quality control complex subunit TCF25 (676 aa).

Disordered stretches follow at residues 1–59 (MSRR…VRVN) and 85–147 (LTDA…ENGL). Over residues 123–136 (GKLRKKKKKQKNKK) the composition is skewed to basic residues. Residue S602 is modified to Phosphoserine.

It belongs to the TCF25 family. Component of the ribosome quality control complex (RQC), composed of the E3 ubiquitin ligase LTN1, TCF25 and NEMF associated with the 60S ribosomal subunit. Interacts (via C-terminus) with NFATC4; the interaction leads to suppresson of NFATC4 transcription factor activity and is reduced following stimulation with angiotensin-2. Interacts with XIAP. In terms of tissue distribution, in the embryo, widely expressed with highest levels in brain. In the adult, highest expression is found in the heart. Repressed in cardiac tissue of patients with heart failure (at protein level). mRNA levels in the heart are unchanged in patients with heart failure.

Its subcellular location is the nucleus. The protein resides in the cytoplasm. The protein localises to the cytosol. Component of the ribosome quality control complex (RQC), a ribosome-associated complex that mediates ubiquitination and extraction of incompletely synthesized nascent chains for proteasomal degradation. In the RQC complex, required to promote formation of 'Lys-48'-linked polyubiquitin chains during ubiquitination of incompletely synthesized proteins by LTN1. May negatively regulate the calcineurin-NFAT signaling cascade by suppressing the activity of transcription factor NFATC4. May play a role in cell death control. The protein is Ribosome quality control complex subunit TCF25 of Homo sapiens (Human).